The sequence spans 663 residues: COBRA-like protein 9 (663 aa).

An N-terminal signal peptide occupies residues 1–23 (MGVLLPIFFGVLLLFTVTPPSMS). Asn-63, Asn-111, Asn-121, Asn-169, Asn-203, Asn-326, Asn-355, Asn-397, Asn-409, Asn-429, Asn-470, Asn-550, and Asn-561 each carry an N-linked (GlcNAc...) asparagine glycan. Ser-638 carries GPI-anchor amidated serine lipidation. Positions 639–663 (GGRRNGAITVLSFITFYVAAFMVLL) are cleaved as a propeptide — removed in mature form.

The protein belongs to the COBRA family. As to expression, expressed only in flowers.

Its subcellular location is the cell membrane. In Arabidopsis thaliana (Mouse-ear cress), this protein is COBRA-like protein 9 (COBL9).